Reading from the N-terminus, the 241-residue chain is DNA repair protein RecO (241 aa).

It belongs to the RecO family.

Functionally, involved in DNA repair and RecF pathway recombination. This Orientia tsutsugamushi (strain Ikeda) (Rickettsia tsutsugamushi) protein is DNA repair protein RecO.